A 104-amino-acid polypeptide reads, in one-letter code: Gastrin (104 aa).

Positions 1–21 (MQRLCVCVLILALALTAFSEA) are cleaved as a signal peptide. Residues 22-49 (SWKPRSQLQDAPSGPGANGGLEPHWLNR) are disordered. Residues 22-58 (SWKPRSQLQDAPSGPGANGGLEPHWLNRLGPASHHRW) constitute a propeptide that is removed on maturation. Pyrrolidone carboxylic acid occurs at positions 59 and 76. Residue Tyr-87 is modified to Sulfotyrosine. Phe-92 bears the Phenylalanine amide mark. Ser-96 is subject to Phosphoserine. Positions 96 to 104 (SAEDGDQHP) are excised as a propeptide.

The protein belongs to the gastrin/cholecystokinin family.

The protein resides in the secreted. Gastrin stimulates the stomach mucosa to produce and secrete hydrochloric acid and the pancreas to secrete its digestive enzymes. It also stimulates smooth muscle contraction and increases blood circulation and water secretion in the stomach and intestine. The polypeptide is Gastrin (GAST) (Felis catus (Cat)).